The sequence spans 179 residues: Natural killer cells antigen CD94 (179 aa).

The Cytoplasmic portion of the chain corresponds to 1 to 10 (MAVFKTTLWR). A helical; Signal-anchor for type II membrane protein transmembrane segment spans residues 11-31 (LISGTLGIICLSLMSTLGILL). Over 32–179 (KNSFTKLSIE…NRYICKQQLI (148 aa)) the chain is Extracellular. Disulfide bonds link cysteine 58-cysteine 70 and cysteine 61-cysteine 72. Residues 68-175 (YRCNCYFISS…CEDKNRYICK (108 aa)) form the C-type lectin domain. N-linked (GlcNAc...) asparagine glycans are attached at residues asparagine 83 and asparagine 132. 2 disulfide bridges follow: cysteine 89–cysteine 174 and cysteine 152–cysteine 166.

Can form disulfide-bonded heterodimer with NKG2 family members KLRC1 and KLRC2. KLRD1-KLRC1 heterodimer interacts with peptide-bound HLA-E-B2M heterotrimeric complex. KLRD1 plays a prominent role in directly interacting with HLA-E. KLRD1-KLRC1 interacts with much higher affinity with peptide-bound HLA-E-B2M than KLRD1-KLRC2. Interacts with the adapter protein TYROBP/DAP12; this interaction is required for cell surface expression and cell activation. In terms of tissue distribution, expressed in NK cell subsets (at protein level). Expressed in memory/effector CD8-positive alpha-beta T cell subsets (at protein level). Expressed in melanoma-specific cytotoxic T cell clones (at protein level). Expressed in terminally differentiated cytotoxic gamma-delta T cells (at protein level). KLRD1-KLRC1 and KLRD1-KLRC2 are differentially expressed in NK and T cell populations, with only minor subsets expressing both receptor complexes (at protein level).

It is found in the cell membrane. Functionally, immune receptor involved in self-nonself discrimination. In complex with KLRC1 or KLRC2 on cytotoxic and regulatory lymphocyte subsets, recognizes non-classical major histocompatibility (MHC) class Ib molecule HLA-E loaded with self-peptides derived from the signal sequence of classical MHC class Ia and non-classical MHC class Ib molecules. Enables cytotoxic cells to monitor the expression of MHC class I molecules in healthy cells and to tolerate self. Primarily functions as a ligand binding subunit as it lacks the capacity to signal. KLRD1-KLRC1 acts as an immune inhibitory receptor. Key inhibitory receptor on natural killer (NK) cells that regulates their activation and effector functions. Dominantly counteracts T cell receptor signaling on a subset of memory/effector CD8-positive T cells as part of an antigen-driven response to avoid autoimmunity. On intraepithelial CD8-positive gamma-delta regulatory T cells triggers TGFB1 secretion, which in turn limits the cytotoxic programming of intraepithelial CD8-positive alpha-beta T cells, distinguishing harmless from pathogenic antigens. In HLA-E-rich tumor microenvironment, acts as an immune inhibitory checkpoint and may contribute to progressive loss of effector functions of NK cells and tumor-specific T cells, a state known as cell exhaustion. Upon HLA-E-peptide binding, transmits intracellular signals through KLRC1 immunoreceptor tyrosine-based inhibition motifs (ITIMs) by recruiting INPP5D/SHIP-1 and INPPL1/SHIP-2 tyrosine phosphatases to ITIMs, and ultimately opposing signals transmitted by activating receptors through dephosphorylation of proximal signaling molecules. Its function is as follows. KLRD1-KLRC2 acts as an immune activating receptor. On cytotoxic lymphocyte subsets recognizes HLA-E loaded with signal sequence-derived peptides from non-classical MHC class Ib HLA-G molecules, likely playing a role in the generation and effector functions of adaptive NK cells and in maternal-fetal tolerance during pregnancy. Regulates the effector functions of terminally differentiated cytotoxic lymphocyte subsets, and in particular may play a role in adaptive NK cell response to viral infection. Upon HLA-E-peptide binding, transmits intracellular signals via the adapter protein TYROBP/DAP12, triggering the phosphorylation of proximal signaling molecules and cell activation. In terms of biological role, (Microbial infection) Viruses like human cytomegalovirus have evolved an escape mechanism whereby virus-induced down-regulation of host MHC class I molecules is coupled to the binding of viral peptides to HLA-E, restoring HLA-E expression and inducing HLA-E-dependent NK cell immune tolerance to infected cells. Recognizes HLA-E in complex with human cytomegalovirus UL40-derived peptide (VMAPRTLIL) and inhibits NK cell cytotoxicity. Functionally, (Microbial infection) May recognize HLA-E in complex with HIV-1 gag/Capsid protein p24-derived peptide (AISPRTLNA) on infected cells and may inhibit NK cell cytotoxicity, a mechanism that allows HIV-1 to escape immune recognition. (Microbial infection) Upon SARS-CoV-2 infection, may contribute to functional exhaustion of cytotoxic NK cells and CD8-positive T cells. On NK cells, may recognize HLA-E in complex with SARS-CoV-2 S/Spike protein S1-derived peptide (LQPRTFLL) expressed on the surface of lung epithelial cells, inducing NK cell exhaustion and dampening antiviral immune surveillance. This is Natural killer cells antigen CD94 (KLRD1) from Homo sapiens (Human).